Reading from the N-terminus, the 496-residue chain is Xylulose kinase (496 aa).

83-84 (MH) is a binding site for substrate. D237 serves as the catalytic Proton acceptor.

The protein belongs to the FGGY kinase family.

It catalyses the reaction D-xylulose + ATP = D-xylulose 5-phosphate + ADP + H(+). In terms of biological role, catalyzes the phosphorylation of D-xylulose to D-xylulose 5-phosphate. This chain is Xylulose kinase, found in Staphylococcus epidermidis (strain ATCC 35984 / DSM 28319 / BCRC 17069 / CCUG 31568 / BM 3577 / RP62A).